A 1469-amino-acid chain; its full sequence is ATP-binding cassette transporter abc4 (1469 aa).

8 helical membrane passes run Ser-21–His-40, Tyr-55–Thr-74, His-94–Val-114, Ala-121–Leu-141, Val-160–Phe-180, Tyr-189–Phe-209, Ile-296–Ala-316, and Trp-337–Phe-357. An ABC transmembrane type-1 1 domain is found at Ile-296–Gln-580. Residue Asn-386 is glycosylated (N-linked (GlcNAc...) asparagine). The next 2 helical transmembrane spans lie at Glu-412–Gln-432 and Val-441–Ala-461. N-linked (GlcNAc...) asparagine glycosylation is present at Asn-510. 2 helical membrane passes run Val-524–Ile-544 and Ile-553–Tyr-573. One can recognise an ABC transporter 1 domain in the interval Ile-611–Glu-840. Asn-615 carries N-linked (GlcNAc...) asparagine glycosylation. Gly-648–Ser-655 contacts ATP. 3 N-linked (GlcNAc...) asparagine glycosylation sites follow: Asn-691, Asn-790, and Asn-815. Residues Gly-894 to Ile-914 form a helical membrane-spanning segment. The ABC transmembrane type-1 2 domain maps to Val-897–Ala-1176. An N-linked (GlcNAc...) asparagine glycan is attached at Asn-923. Residues Phe-936–Val-956 traverse the membrane as a helical segment. A glycan (N-linked (GlcNAc...) asparagine) is linked at Asn-1007. A run of 5 helical transmembrane segments spans residues Ser-1009–Val-1029, Met-1033–Leu-1053, Ile-1065–Val-1085, Val-1120–Leu-1140, and Gly-1148–Val-1168. Residues Phe-1214–Gly-1453 enclose the ABC transporter 2 domain. Gly-1246–Ser-1253 is an ATP binding site. The N-linked (GlcNAc...) asparagine glycan is linked to Asn-1355.

The protein belongs to the ABC transporter superfamily. ABCC family. Conjugate transporter (TC 3.A.1.208) subfamily.

The protein localises to the vacuole membrane. The enzyme catalyses ATP + H2O + xenobioticSide 1 = ADP + phosphate + xenobioticSide 2.. Its function is as follows. Involved in detoxification of xenobiotics, and vacuolar sequestration of glutathione S-conjugates. Together with abc2, required for accumulation of a red pigment (ade pigment) in the vacuole of a mutant affected in the adenine biosynthetic pathway. This chain is ATP-binding cassette transporter abc4, found in Schizosaccharomyces pombe (strain 972 / ATCC 24843) (Fission yeast).